We begin with the raw amino-acid sequence, 93 residues long: uncharacterized protein (93 aa).

Residues 68–88 form a helical membrane-spanning segment; that stretch reads WLVTVVLANGVVSLFLLGGLI.

The protein resides in the membrane. This is an uncharacterized protein from Mycoplasma pneumoniae (strain ATCC 29342 / M129 / Subtype 1) (Mycoplasmoides pneumoniae).